A 38-amino-acid polypeptide reads, in one-letter code: Large ribosomal subunit protein bL36 (38 aa).

This sequence belongs to the bacterial ribosomal protein bL36 family.

The chain is Large ribosomal subunit protein bL36 from Alcanivorax borkumensis (strain ATCC 700651 / DSM 11573 / NCIMB 13689 / SK2).